Reading from the N-terminus, the 445-residue chain is Phosphoglucosamine mutase (445 aa).

Residue Ser99 is the Phosphoserine intermediate of the active site. Positions 99, 242, 244, and 246 each coordinate Mg(2+). Position 99 is a phosphoserine (Ser99).

The protein belongs to the phosphohexose mutase family. It depends on Mg(2+) as a cofactor. Activated by phosphorylation.

The enzyme catalyses alpha-D-glucosamine 1-phosphate = D-glucosamine 6-phosphate. Catalyzes the conversion of glucosamine-6-phosphate to glucosamine-1-phosphate. The protein is Phosphoglucosamine mutase of Helicobacter pylori (strain HPAG1).